We begin with the raw amino-acid sequence, 248 residues long: Protein PARTING DANCERS homolog (248 aa).

Over residues 1-10 the composition is skewed to polar residues; that stretch reads MERSTHSTGW. Residues 1 to 25 are disordered; it reads MERSTHSTGWTCLPPPPPEPAAPGR.

This sequence belongs to the ERCC1/RAD10/SWI10 family. Interacts with SHOC1 (via C-terminus). Interacts with HEI10. In terms of tissue distribution, highly expressed in anthers and pistil during meiosis. Expressed in pollen mother cells (PMCs) during meiosis. Expressed at low levels in roots, shoots, leaves, flowers, and glumes.

It localises to the chromosome. It is found in the nucleus. The protein localises to the cytoplasm. Its subcellular location is the cell membrane. Its function is as follows. Essential for normal crossover (CO) formation during meiosis. Essential component for the formation of class I meiotic COs. Interacts with SHOC1, another meiotic component, to regulate CO formation, possibly by stabilizing the recombination intermediates during meiosis. PTD and SHOC1 may form transient heterotrimeric or heterotetrameric complexes with HEI10 and/or ZIP4 to promote class I COs formation. Does not seem to be involved in early meiotic recombination steps involving double-strand break (DSB) formation, processing, and single-strand invasion. Does not seem to be involved in homologous pairing or synaptonemal complex (SC) assembly. The polypeptide is Protein PARTING DANCERS homolog (Oryza sativa subsp. japonica (Rice)).